A 348-amino-acid chain; its full sequence is Probable dual-specificity RNA methyltransferase RlmN (348 aa).

Glutamate 93 serves as the catalytic Proton acceptor. One can recognise a Radical SAM core domain in the interval 99-333 (TEKRLTACLS…VSLRKSRGLD (235 aa)). Residues cysteine 106 and cysteine 338 are joined by a disulfide bond. [4Fe-4S] cluster is bound by residues cysteine 113, cysteine 117, and cysteine 120. S-adenosyl-L-methionine-binding positions include 160 to 161 (GE), serine 190, 219 to 221 (SLH), and asparagine 295. Cysteine 338 (S-methylcysteine intermediate) is an active-site residue.

It belongs to the radical SAM superfamily. RlmN family. [4Fe-4S] cluster is required as a cofactor.

It is found in the cytoplasm. The enzyme catalyses adenosine(2503) in 23S rRNA + 2 reduced [2Fe-2S]-[ferredoxin] + 2 S-adenosyl-L-methionine = 2-methyladenosine(2503) in 23S rRNA + 5'-deoxyadenosine + L-methionine + 2 oxidized [2Fe-2S]-[ferredoxin] + S-adenosyl-L-homocysteine. The catalysed reaction is adenosine(37) in tRNA + 2 reduced [2Fe-2S]-[ferredoxin] + 2 S-adenosyl-L-methionine = 2-methyladenosine(37) in tRNA + 5'-deoxyadenosine + L-methionine + 2 oxidized [2Fe-2S]-[ferredoxin] + S-adenosyl-L-homocysteine. Its function is as follows. Specifically methylates position 2 of adenine 2503 in 23S rRNA and position 2 of adenine 37 in tRNAs. This chain is Probable dual-specificity RNA methyltransferase RlmN, found in Prochlorococcus marinus (strain MIT 9215).